Reading from the N-terminus, the 255-residue chain is Type III pantothenate kinase (255 aa).

ATP is bound at residue 6 to 13 (DIGNSNIV). Residues Tyr-100 and 107–110 (GSDR) contribute to the substrate site. The active-site Proton acceptor is the Asp-109. Asp-129 provides a ligand contact to K(+). Thr-132 is a binding site for ATP. Substrate is bound at residue Thr-184.

It belongs to the type III pantothenate kinase family. In terms of assembly, homodimer. It depends on NH4(+) as a cofactor. The cofactor is K(+).

The protein resides in the cytoplasm. It carries out the reaction (R)-pantothenate + ATP = (R)-4'-phosphopantothenate + ADP + H(+). The protein operates within cofactor biosynthesis; coenzyme A biosynthesis; CoA from (R)-pantothenate: step 1/5. Its function is as follows. Catalyzes the phosphorylation of pantothenate (Pan), the first step in CoA biosynthesis. This is Type III pantothenate kinase from Brevibacillus brevis (strain 47 / JCM 6285 / NBRC 100599).